We begin with the raw amino-acid sequence, 405 residues long: Formate-dependent phosphoribosylglycinamide formyltransferase (405 aa).

N(1)-(5-phospho-beta-D-ribosyl)glycinamide-binding positions include 22–23 (EL) and E82. Residues R115, K162, 167–172 (SSGKGQ), 202–205 (EGFI), and E210 each bind ATP. Positions 120-320 (RLAAETLGLP…EFELHARAIL (201 aa)) constitute an ATP-grasp domain. The Mg(2+) site is built by E279 and E291. Residues D298, K367, and 374-375 (RR) contribute to the N(1)-(5-phospho-beta-D-ribosyl)glycinamide site.

Belongs to the PurK/PurT family. Homodimer.

It carries out the reaction N(1)-(5-phospho-beta-D-ribosyl)glycinamide + formate + ATP = N(2)-formyl-N(1)-(5-phospho-beta-D-ribosyl)glycinamide + ADP + phosphate + H(+). It participates in purine metabolism; IMP biosynthesis via de novo pathway; N(2)-formyl-N(1)-(5-phospho-D-ribosyl)glycinamide from N(1)-(5-phospho-D-ribosyl)glycinamide (formate route): step 1/1. Involved in the de novo purine biosynthesis. Catalyzes the transfer of formate to 5-phospho-ribosyl-glycinamide (GAR), producing 5-phospho-ribosyl-N-formylglycinamide (FGAR). Formate is provided by PurU via hydrolysis of 10-formyl-tetrahydrofolate. In Leptothrix cholodnii (strain ATCC 51168 / LMG 8142 / SP-6) (Leptothrix discophora (strain SP-6)), this protein is Formate-dependent phosphoribosylglycinamide formyltransferase.